The following is a 274-amino-acid chain: MMDQILGTNFTYEGAKEVARGLEGFSAKLAVGYIATIFGLKYYMKDRKAFDLSTPLNIWNGILSTFSLLGFLFTFPTLLSVIRKDGFSHTYSHVSELYTDSTSGYWIFLWVISKIPELLDTVFIVLRKRPLIFMHWYHHALTGYYALVCYHEDAVHMVWVVWMNYIIHAFMYGYYLLKSLKVPIPPSVAQAITTSQMVQFAVAIFAQVHVSYKHYVEGVEGLAYSFRGTAIGFFMLTTYFYLWIQFYKEHYLKNGGKKYNLAKDQAKTQTKKAN.

Topologically, residues methionine 1–glutamate 23 are extracellular. The helical transmembrane segment at glycine 24–methionine 44 threads the bilayer. The Cytoplasmic portion of the chain corresponds to lysine 45 to glycine 61. The chain crosses the membrane as a helical span at residues isoleucine 62–isoleucine 82. The Extracellular portion of the chain corresponds to arginine 83–tyrosine 105. The chain crosses the membrane as a helical span at residues tryptophan 106–leucine 126. The Cytoplasmic segment spans residues arginine 127 to arginine 129. Residues proline 130–tyrosine 150 traverse the membrane as a helical segment. Residues histidine 151 to histidine 156 lie on the Extracellular side of the membrane. A helical membrane pass occupies residues methionine 157–leucine 177. The Cytoplasmic segment spans residues lysine 178–serine 187. Residues valine 188–valine 208 traverse the membrane as a helical segment. The Extracellular portion of the chain corresponds to histidine 209–arginine 227. A helical transmembrane segment spans residues glycine 228 to lysine 248. Topologically, residues glutamate 249 to asparagine 274 are cytoplasmic.

This sequence belongs to the ELO family. As to expression, expressed in the gut and unidentified head cells.

It is found in the membrane. It carries out the reaction 11-methyldodecanoyl-CoA + malonyl-CoA + H(+) = 3-oxoisopentadecanoyl-CoA + CO2 + CoA. It catalyses the reaction isopentadecanoyl-CoA + malonyl-CoA + H(+) = 3-oxoisoheptadecanoyl-CoA + CO2 + CoA. It participates in lipid metabolism; fatty acid biosynthesis. Functionally, catalyzes the first and rate-limiting reaction of the four reactions that constitute the long-chain fatty acids elongation cycle. Uses malonyl-CoA to add 2 carbons per cycle to the chain of long-chain fatty acids. Condensing enzyme required for the formation of isopentadecanoate (C15iso) and isoheptadecanoate (C17iso), both play critical roles in animal development and growth. This Caenorhabditis elegans protein is Long chain fatty acid elongase 5.